We begin with the raw amino-acid sequence, 501 residues long: Glucan endo-1,3-beta-glucosidase 3 (501 aa).

A signal peptide spans 1-18 (MAALLLLFLFLFASSALS). Asn-88 and Asn-107 each carry an N-linked (GlcNAc...) asparagine glycan. Glu-116 functions as the Proton donor in the catalytic mechanism. Residues Asn-171 and Asn-253 are each glycosylated (N-linked (GlcNAc...) asparagine). Catalysis depends on Glu-263, which acts as the Nucleophile. N-linked (GlcNAc...) asparagine glycans are attached at residues Asn-295, Asn-353, and Asn-357. Cys-361 and Cys-424 are oxidised to a cystine. 4 N-linked (GlcNAc...) asparagine glycosylation sites follow: Asn-451, Asn-456, Asn-457, and Asn-466. A lipid anchor (GPI-anchor amidated serine) is attached at Ser-470. Residues 471–501 (GCIPKYYHHPHASFGDLTLLSLLLIIALVFL) constitute a propeptide, removed in mature form.

This sequence belongs to the glycosyl hydrolase 17 family. In terms of processing, contains two additional disulfide bonds.

It is found in the cell membrane. It catalyses the reaction Hydrolysis of (1-&gt;3)-beta-D-glucosidic linkages in (1-&gt;3)-beta-D-glucans.. This Arabidopsis thaliana (Mouse-ear cress) protein is Glucan endo-1,3-beta-glucosidase 3.